An 830-amino-acid polypeptide reads, in one-letter code: Pentatricopeptide repeat-containing protein At5g55740, chloroplastic (830 aa).

The N-terminal 59 residues, 1 to 59 (MASLPFNTIPNKVPFSVSSKPSSKHHDEQAHSPSSTSYFHRVSSLCKNGEIKEALSLVT), are a transit peptide targeting the chloroplast. A disordered region spans residues 15 to 36 (FSVSSKPSSKHHDEQAHSPSST). PPR repeat units lie at residues 69–103 (GPEI…GDFY), 106–136 (NEYI…LRVR), 137–171 (NVFS…EIFP), 172–206 (DNFV…GLED), 207–237 (CVFV…IPDR), 238–272 (NAVA…GVEP), 273–307 (TRVT…GMEL), 308–338 (DNIL…MFEK), 339–373 (DVVT…KLKY), 374–408 (DCVT…SFES), 409–439 (DIVL…TVEK), 440–474 (DLIL…GVPP), 475–509 (NVIT…GIIP), 510–544 (NLIS…GLRP), 545–575 (NAFS…IIRN), 581–611 (LVSI…KLYS), 612–646 (ELPL…GLKP), 647–682 (DNIT…SMKP), and 683–713 (CLEH…MPFK). A type E motif region spans residues 718–793 (MIQSLVASCN…KPGCSWIQIT (76 aa)). The tract at residues 796–826 (EGVHVFVANDKTHTRINEIQMMLALLLYDMG) is type E(+) motif.

The protein belongs to the PPR family. PCMP-E subfamily.

Its subcellular location is the plastid. It localises to the chloroplast. Plays a major role in chloroplast RNA editing. Acts as a site-recognition transacting factor involved in the edition of the site 2 of ndhD (ndhD-2), which encodes a subunit of the NDH complex. This is Pentatricopeptide repeat-containing protein At5g55740, chloroplastic (CRR21) from Arabidopsis thaliana (Mouse-ear cress).